The sequence spans 407 residues: Imidazolonepropionase (407 aa).

2 residues coordinate Fe(3+): His-74 and His-76. Residues His-74 and His-76 each coordinate Zn(2+). 4-imidazolone-5-propanoate-binding residues include Arg-83, Tyr-146, and His-179. Tyr-146 is a binding site for N-formimidoyl-L-glutamate. His-244 contributes to the Fe(3+) binding site. Residue His-244 participates in Zn(2+) binding. Gln-247 contributes to the 4-imidazolone-5-propanoate binding site. Asp-319 contacts Fe(3+). Residue Asp-319 coordinates Zn(2+). Residues Asn-321 and Gly-323 each contribute to the N-formimidoyl-L-glutamate site. Thr-324 is a binding site for 4-imidazolone-5-propanoate.

Belongs to the metallo-dependent hydrolases superfamily. HutI family. Requires Zn(2+) as cofactor. Fe(3+) serves as cofactor.

The protein resides in the cytoplasm. It carries out the reaction 4-imidazolone-5-propanoate + H2O = N-formimidoyl-L-glutamate. It participates in amino-acid degradation; L-histidine degradation into L-glutamate; N-formimidoyl-L-glutamate from L-histidine: step 3/3. Catalyzes the hydrolytic cleavage of the carbon-nitrogen bond in imidazolone-5-propanoate to yield N-formimidoyl-L-glutamate. It is the third step in the universal histidine degradation pathway. The sequence is that of Imidazolonepropionase from Salmonella arizonae (strain ATCC BAA-731 / CDC346-86 / RSK2980).